We begin with the raw amino-acid sequence, 631 residues long: Tumor protein p73 (631 aa).

Residues 1 to 43 form a transactivation region; sequence MAQTSSSSSSTFEHLWSSLEPDSTYFDLPQPSQGTSEASGSEE. Disordered regions lie at residues 23 to 43 and 69 to 113; these read STYFDLPQPSQGTSEASGSEE and SRAA…NTDY. Position 24 is a phosphothreonine; by PLK1 (Thr24). Residue Tyr25 is modified to Phosphotyrosine; by SRC and HCK. 2 stretches are compositionally biased toward polar residues: residues 30–43 and 86–100; these read QPSQGTSEASGSEE and PTHSPYAQPSSTFDT. Tyr91 carries the post-translational modification Phosphotyrosine; by ABL1. The segment at 123-302 is DNA-binding; that stretch reads FQQSSTAKSA…DRKADEDHYR (180 aa). Residues Cys186, His189, Cys250, and Cys254 each contribute to the Zn(2+) site. Residues 306 to 315 are compositionally biased toward polar residues; the sequence is ALNESTTKNG. Residues 306–334 form a disordered region; the sequence is ALNESTTKNGAASKRAFKQSPPAIPALGT. Residues 337–372 are interaction with HIPK2; that stretch reads KKRRHGDEDMFYMHVRGRENFEILMKVKESLELMEL. The segment at 337–378 is oligomerization; it reads KKRRHGDEDMFYMHVRGRENFEILMKVKESLELMELVPQPLV. The PPxY motif signature appears at 477-481; the sequence is PPPPY. The 67-residue stretch at 479-545 folds into the SAM domain; sequence PPYHADPSLV…WRGLQDLKQS (67 aa). A Glycyl lysine isopeptide (Lys-Gly) (interchain with G-Cter in SUMO); alternate cross-link involves residue Lys622. A Glycyl lysine isopeptide (Lys-Gly) (interchain with G-Cter in SUMO2); alternate cross-link involves residue Lys622.

Belongs to the p53 family. Found in a complex with p53/TP53 and CABLES1. The C-terminal oligomerization domain binds to the ABL1 tyrosine kinase SH3 domain. Interacts with HECW2, HIPK2, RANBP9 and WWOX. Interacts (via SAM domain) with FBXO45 (via B30.2/SPRY domain). Interacts with YAP1 (phosphorylated form). Interacts with HCK (via SH3 domain); this inhibits TP73 activity and degradation. Interacts (via SAM domain) with NQO1; this interaction is NADH-dependent, stabilizes TP73 in response to oxidative stress and protects it from ubiquitin-independent degradation by the 20S proteasome. The cofactor is Zn(2+). Post-translationally, sumoylated on Lys-622, which potentiates proteasomal degradation but does not affect transcriptional activity. Phosphorylation by PLK1 and PLK3 inhibits the transcription regulator activity and pro-apoptotic function. Higher levels of phosphorylation seen in striatal neurons of. mutant huntingtin (htt) transgenic mice. In terms of processing, polyubiquitinated by RCHY1/PIRH2; leading to its degradation by the proteasome. Found in striatal neurons of mutant huntingtin (htt) transgenic mice (at protein level). Isoform 1 is expressed in the nasal epithelium, the vomeronasal organ, the hippocampus and the hypothalamus.

The protein resides in the nucleus. It localises to the cytoplasm. Participates in the apoptotic response to DNA damage. Isoforms containing the transactivation domain are pro-apoptotic, isoforms lacking the domain are anti-apoptotic and block the function of p53 and transactivating p73 isoforms. May be a tumor suppressor protein. Is an activator of FOXJ1 expression, essential for the positive regulation of lung ciliated cell differentiation. The sequence is that of Tumor protein p73 (Tp73) from Mus musculus (Mouse).